We begin with the raw amino-acid sequence, 229 residues long: Peroxiredoxin-like 2A (229 aa).

The tract at residues 14-112 (MWSIGAGALG…DQLGVPLYAV (99 aa)) is thioredoxin fold. Residues Cys85 and Cys88 each act as redox-active in the active site.

The protein belongs to the peroxiredoxin-like PRXL2 family. PRXL2A subfamily. Expressed in CSF1 and TNFSF11-stimulated CD14(+) peripheral blood mononuclear cells (PBMCs).

The protein resides in the cytoplasm. It is found in the secreted. Its function is as follows. Involved in redox regulation of the cell. Acts as an antioxidant. Inhibits TNFSF11-induced NFKB1 and JUN activation and osteoclast differentiation. May affect bone resorption and help to maintain bone mass. Acts as a negative regulator of macrophage-mediated inflammation by inhibiting macrophage production of inflammatory cytokines, probably through suppression of the MAPK signaling pathway. This Homo sapiens (Human) protein is Peroxiredoxin-like 2A.